Consider the following 623-residue polypeptide: MTVPLIHSRDVLESRLKEIPAEPGVYLMRDATDQILYVGKSKKLRSRVRSYFRFTSDLSPRIQRMVAQVCEIEFIVTDNESEALALEDNLIKTHQPPYNVLLKDDKKYPYLCITWSEPYPQLYITRHRRLDRNQDKYYGPYTDVGLLRHTLGLVKRIFPLRQRPKPLYKDRTCLNYDIGRCPGVCQGLISPEEYRKTLTQVAMIFQGQTDELIRELQEKMIQAAEQENYEAAARYRDQIRGLEQLGESQKVSLPNSTVSRDALALAMNDSRACIQLFQVRAGKLVGRLGFVAENRGDDPGLILQRALQEHYQYCDPVEIPSEILTQYELPDHDFLESWLSQKKGRKVSLVAPQRQSKAELIELVERNAQLELTRTQRLADRDAAALERLAEVLDLPDVPRRLEAYDISHIQGSDAVASQVVFIDGLPAKQHYRRYKIRNPEVRPGHSDDFASHAEVARRRFSKMTPEDQPDLVLIDGGKGQLSAVMAVLADLGLDHLPVIALAKREEEIFLPGNPVPLRLPAQDPARLLLQRLRDEAHRFALAFHRQQRKARQHASTLDEIPGLGKYRQKLLMEEFRSIARIQVASEDQLAQVPGIGPKIARQIYRYFHPETQAESPETAQVE.

One can recognise a GIY-YIG domain in the interval 21–100 (AEPGVYLMRD…IKTHQPPYNV (80 aa)). A UVR domain is found at 210-245 (DELIRELQEKMIQAAEQENYEAAARYRDQIRGLEQL).

This sequence belongs to the UvrC family. Interacts with UvrB in an incision complex.

Its subcellular location is the cytoplasm. In terms of biological role, the UvrABC repair system catalyzes the recognition and processing of DNA lesions. UvrC both incises the 5' and 3' sides of the lesion. The N-terminal half is responsible for the 3' incision and the C-terminal half is responsible for the 5' incision. This is UvrABC system protein C from Synechococcus sp. (strain JA-2-3B'a(2-13)) (Cyanobacteria bacterium Yellowstone B-Prime).